The chain runs to 1400 residues: MNQEVMNLFNQQAQPQSFDQIKISISSPEKILSWSYGEIKKPETINYRTFKPERDGLFCARIFGPIKDYECLCGKYKRMKYKGVICEKCGVEVTLARVRRDRMGHIELAAPVAHIWFLKSLPSRIGLLLDMALKDLERILYFESYVVIEPGLTPLKERQLLSEEEYLRAQEEYGEDSFTAMIGAEAIRRILQDLNLEKIAADLRQEIATTTSDLKPKKLLKRLKIIEAFQMSGNRPEWMILTVVPVIPPDLRPLVPLDGGRFATSDLNDLYRRVINRNNRLKRLIELRAPDIIIRNEKRMLQEAVDALFDNGRRGRVITGANKRPLKSLADMLKGKQGRFRQNLLGKRVDYSGRSVIVVGPELKLHQCGLPKKMALELFKPFIYARLDAKGFSATVKQAKKLVEKEKPEVWDILDEVIREHPVMLNRAPTLHRLGIQAFEPKLIEGKAIQLHPLVCAAFNADFDGDQMAVHVPLSLEAQLEARVLMMSTNNILHPANGAPIIVPSQDIVLGLYYLSIVADGAPGEYKPNNPQNPMQGVYGDFGELEHALASRAVTLHSRIKWRWKGLGPDGEEISRTYDTTPGRVILSSVLPRHPKVPFDVVNKLMTKKEISAMIDIVYRHCGQKESVIFCDRIMGLGFSHAFKAGISFGKDDMVVPENKWSIVDETRALVKDYEQQYQDGLITQGEKYNKVVDAWAKCSDRLASEMMNRISSVQKDENGADKQVNSIYMMSHSGARGSPAQMKQLAAMRGLMAKPSGEIIESPIISNFKEGLDVLEYFNSTHGARKGLADTALKTANSGYLTRRLVDVAQDAVIREVDCGTENGIRMRAIIDAGQVVATLATRILGRATAEDLVAPDGTIIVPKGQMIEERHLEAISKAGIQEVKIRSVLVCATKNGVCATCYGRDLARGTPVNQGEAVGVIAAQSIGEPGTQLTMRTFHIGGAAQIADSSFIESSFEGTVRIRNRGLARNSDGDLVAIGRNVAVVIVGPDGTERAVHRLQYGARVRVDEGDQIKRGQRIAEWDPYTRPILTEVDGIVAYEDLIDGQSITETTDESTGIAKRVVIDWRGSARTADLRPAIAIHDQTGKVQKLPRGSDARALLPVDAIIGVDPGARVKAGDILARVSTESAKTRDITGGLPRVAELFEARRPKDAAIIAEKSGTISFGRDYKNKRRLTLTPHDGSEPVEYLIPKGKHIHLQDGDVVEIGDFIVDGNPAPHDILAIKGVEELAAYLVNEIQEVYRLQGVSINDKHIEVIVRQMLQKVEITDSGDSEILTGDQIDRTELQEINEQLIAEGKKPVQGVPVLLGITKASLQTRSFISAASFQETTRVLTEAAVNGKVDTLEGLKENVIVGSLIPAGTGAMIADIKSIARRRDDLIMAQKAAESGAALPELPAAE.

Zn(2+) contacts are provided by cysteine 71, cysteine 73, cysteine 86, and cysteine 89. Residues aspartate 462, aspartate 464, and aspartate 466 each contribute to the Mg(2+) site. The Zn(2+) site is built by cysteine 820, cysteine 893, cysteine 900, and cysteine 903.

Belongs to the RNA polymerase beta' chain family. The RNAP catalytic core consists of 2 alpha, 1 beta, 1 beta' and 1 omega subunit. When a sigma factor is associated with the core the holoenzyme is formed, which can initiate transcription. The cofactor is Mg(2+). Requires Zn(2+) as cofactor.

The catalysed reaction is RNA(n) + a ribonucleoside 5'-triphosphate = RNA(n+1) + diphosphate. Functionally, DNA-dependent RNA polymerase catalyzes the transcription of DNA into RNA using the four ribonucleoside triphosphates as substrates. In Methylobacterium nodulans (strain LMG 21967 / CNCM I-2342 / ORS 2060), this protein is DNA-directed RNA polymerase subunit beta'.